Consider the following 23-residue polypeptide: Conotoxin Cl6c (23 aa).

Intrachain disulfides connect Cys-2–Cys-12, Cys-5–Cys-17, and Cys-11–Cys-21.

Expressed by the venom duct.

The protein localises to the secreted. The protein is Conotoxin Cl6c of Californiconus californicus (California cone).